The primary structure comprises 466 residues: Bifunctional protein GlmU (466 aa).

The segment at 1-233 (MLHKSVLGLV…ADEAMGANDR (233 aa)) is pyrophosphorylase. Residues 11–14 (LAAG), lysine 25, glutamine 79, and 84–85 (GT) each bind UDP-N-acetyl-alpha-D-glucosamine. Aspartate 108 contributes to the Mg(2+) binding site. UDP-N-acetyl-alpha-D-glucosamine is bound by residues glycine 143, glutamate 158, asparagine 173, and asparagine 231. A Mg(2+)-binding site is contributed by asparagine 231. A linker region spans residues 234–254 (AQLAALEAVYRQRKVQELFAQ). An N-acetyltransferase region spans residues 255–466 (GVTLIDPNRI…QKKKEHKNDA (212 aa)). UDP-N-acetyl-alpha-D-glucosamine is bound by residues arginine 337 and lysine 355. The active-site Proton acceptor is the histidine 367. The UDP-N-acetyl-alpha-D-glucosamine site is built by tyrosine 370 and asparagine 381. Acetyl-CoA contacts are provided by residues alanine 384, 390-391 (NY), serine 409, alanine 427, and arginine 444.

This sequence in the N-terminal section; belongs to the N-acetylglucosamine-1-phosphate uridyltransferase family. The protein in the C-terminal section; belongs to the transferase hexapeptide repeat family. In terms of assembly, homotrimer. The cofactor is Mg(2+).

It is found in the cytoplasm. The catalysed reaction is alpha-D-glucosamine 1-phosphate + acetyl-CoA = N-acetyl-alpha-D-glucosamine 1-phosphate + CoA + H(+). It catalyses the reaction N-acetyl-alpha-D-glucosamine 1-phosphate + UTP + H(+) = UDP-N-acetyl-alpha-D-glucosamine + diphosphate. Its pathway is nucleotide-sugar biosynthesis; UDP-N-acetyl-alpha-D-glucosamine biosynthesis; N-acetyl-alpha-D-glucosamine 1-phosphate from alpha-D-glucosamine 6-phosphate (route II): step 2/2. The protein operates within nucleotide-sugar biosynthesis; UDP-N-acetyl-alpha-D-glucosamine biosynthesis; UDP-N-acetyl-alpha-D-glucosamine from N-acetyl-alpha-D-glucosamine 1-phosphate: step 1/1. It participates in bacterial outer membrane biogenesis; LPS lipid A biosynthesis. Its function is as follows. Catalyzes the last two sequential reactions in the de novo biosynthetic pathway for UDP-N-acetylglucosamine (UDP-GlcNAc). The C-terminal domain catalyzes the transfer of acetyl group from acetyl coenzyme A to glucosamine-1-phosphate (GlcN-1-P) to produce N-acetylglucosamine-1-phosphate (GlcNAc-1-P), which is converted into UDP-GlcNAc by the transfer of uridine 5-monophosphate (from uridine 5-triphosphate), a reaction catalyzed by the N-terminal domain. The chain is Bifunctional protein GlmU from Dichelobacter nodosus (strain VCS1703A).